Reading from the N-terminus, the 736-residue chain is Epithelial splicing regulatory protein 2 (736 aa).

RRM domains lie at 224–301, 325–405, and 659–736; these read TVIR…KATG, MIIR…RSTA, and ALVR…ACCE.

It belongs to the ESRP family.

Its subcellular location is the nucleus. Its function is as follows. mRNA splicing factor that regulates the formation of epithelial cell-specific isoforms. Specifically regulates the expression of FGFR2-IIIb, an epithelial cell-specific isoform of fgfr2. Acts by directly binding specific sequences in mRNAs. Binds the GU-rich sequence motifs in the ISE/ISS-3, a cis-element regulatory region present in the mRNA of fgfr2. This chain is Epithelial splicing regulatory protein 2 (esrp2), found in Danio rerio (Zebrafish).